Reading from the N-terminus, the 195-residue chain is Cysteine/O-acetylserine efflux protein (195 aa).

The Periplasmic portion of the chain corresponds to Met-1 to Phe-9. A helical membrane pass occupies residues Trp-10–Thr-32. Topologically, residues Ala-33–Met-46 are cytoplasmic. A helical membrane pass occupies residues Ser-47–Ile-67. Over Asp-68 to Pro-69 the chain is Periplasmic. The chain crosses the membrane as a helical span at residues Ala-70–Ile-90. At Ala-91–Pro-104 the chain is on the cytoplasmic side. Residues Val-105–Ile-125 form a helical membrane-spanning segment. Residues Thr-126 to Trp-141 lie on the Periplasmic side of the membrane. Residues Val-142–Leu-162 form a helical membrane-spanning segment. Topologically, residues Ala-163–Arg-176 are cytoplasmic. The chain crosses the membrane as a helical span at residues Gln-177–Phe-194. Tyr-195 is a topological domain (periplasmic).

The protein belongs to the Rht family.

Its subcellular location is the cell inner membrane. The catalysed reaction is O-acetyl-L-serine(in) = O-acetyl-L-serine(out). It catalyses the reaction L-cysteine(in) = L-cysteine(out). Its function is as follows. Exporter of O-acetylserine (OAS) and cysteine. This chain is Cysteine/O-acetylserine efflux protein (eamB), found in Salmonella paratyphi A (strain ATCC 9150 / SARB42).